We begin with the raw amino-acid sequence, 142 residues long: Acidic phospholipase A2 KBf-grIB (142 aa).

7 cysteine pairs are disulfide-bonded: cysteine 28/cysteine 94, cysteine 44/cysteine 141, cysteine 46/cysteine 62, cysteine 61/cysteine 122, cysteine 68/cysteine 115, cysteine 78/cysteine 108, and cysteine 101/cysteine 113. Positions 45, 47, and 49 each coordinate Ca(2+). Histidine 65 is an active-site residue. A Ca(2+)-binding site is contributed by aspartate 66. The active site involves aspartate 116.

The protein belongs to the phospholipase A2 family. Group I subfamily. D49 sub-subfamily. It depends on Ca(2+) as a cofactor. In terms of tissue distribution, expressed by the venom gland.

It localises to the secreted. It catalyses the reaction a 1,2-diacyl-sn-glycero-3-phosphocholine + H2O = a 1-acyl-sn-glycero-3-phosphocholine + a fatty acid + H(+). Functionally, PLA2 catalyzes the calcium-dependent hydrolysis of the 2-acyl groups in 3-sn-phosphoglycerides. The sequence is that of Acidic phospholipase A2 KBf-grIB from Bungarus fasciatus (Banded krait).